Here is a 192-residue protein sequence, read N- to C-terminus: Elongation factor P (192 aa).

Residues 133-157 are disordered; the sequence is EVTETTPGVKGDTAQGGDKPATLES.

This sequence belongs to the elongation factor P family.

The protein resides in the cytoplasm. It functions in the pathway protein biosynthesis; polypeptide chain elongation. In terms of biological role, involved in peptide bond synthesis. Stimulates efficient translation and peptide-bond synthesis on native or reconstituted 70S ribosomes in vitro. Probably functions indirectly by altering the affinity of the ribosome for aminoacyl-tRNA, thus increasing their reactivity as acceptors for peptidyl transferase. This is Elongation factor P from Salinibacter ruber (strain DSM 13855 / M31).